Reading from the N-terminus, the 419-residue chain is POU domain, class 4, transcription factor 1 (419 aa).

Positions 57 to 66 match the POU-IV box motif; sequence RAEALAAVDI. Disordered stretches follow at residues 94–117 and 131–197; these read STVP…GDLL and AGGA…HSLG. Residues 99 to 108 show a composition bias toward basic residues; the sequence is AHHHHHHHHH. Over residues 131-184 the composition is skewed to gly residues; it reads AGGAGAAAGGGGAHDGPGGGGGPGGGGGPGGGPGGGGGGGPGGGGGGPGGGLLG. The region spanning 261–338 is the POU-specific domain; it reads SDTDPRELEA…LQAWLEEAEG (78 aa). The homeobox DNA-binding region spans 356 to 415; that stretch reads KRKRTSIAAPEKRSLEAYFAVQPRPSSEKIAAIAEKLDLKKNVVRVWFCNQRQKQKRMKF.

Belongs to the POU transcription factor family. Class-4 subfamily. Interacts (via N-terminus) with RIT2; the interaction controls POU4F1 transactivation activity on some neuronal target genes. Isoform 1 interacts with POU4F2; this interaction inhibits both POU4F1 DNA-binding and transcriptional activities. Isoform 1 interacts (C-terminus) with ESR1 (via DNA-binding domain); this interaction decreases the estrogen receptor ESR1 transcriptional activity in a DNA- and ligand 17-beta-estradiol-independent manner. As to expression, expressed in the brain and the retina. Present in the developing brain, spinal cord and eye.

It is found in the nucleus. The protein localises to the cytoplasm. In terms of biological role, multifunctional transcription factor with different regions mediating its different effects. Acts by binding (via its C-terminal domain) to sequences related to the consensus octamer motif 5'-ATGCAAAT-3' in the regulatory regions of its target genes. Regulates the expression of specific genes involved in differentiation and survival within a subset of neuronal lineages. It has been shown that activation of some of these genes requires its N-terminal domain, maybe through a neuronal-specific cofactor. Activates BCL2 expression and protects neuronal cells from apoptosis (via the N-terminal domain). Induces neuronal process outgrowth and the coordinate expression of genes encoding synaptic proteins. Exerts its major developmental effects in somatosensory neurons and in brainstem nuclei involved in motor control. Stimulates the binding affinity of the nuclear estrogene receptor ESR1 to DNA estrogen response element (ERE), and hence modulates ESR1-induced transcriptional activity. May positively regulate POU4F2 and POU4F3. Regulates dorsal root ganglion sensory neuron specification and axonal projection into the spinal cord. Plays a role in TNFSF11-mediated terminal osteoclast differentiation. Negatively regulates its own expression interacting directly with a highly conserved autoregulatory domain surrounding the transcription initiation site. Its function is as follows. Able to act as transcription factor, cannot regulate the expression of the same subset of genes than isoform 1. Does not have antiapoptotic effect on neuronal cells. This is POU domain, class 4, transcription factor 1 from Homo sapiens (Human).